The chain runs to 360 residues: Dehydrogenase mokE (360 aa).

Position 50–53 (Ser50–Lys53) interacts with NADP(+). Ala134–Leu141 contacts substrate. NADP(+)-binding positions include Ser173 to Thr176, Ser196 to Asn199, Tyr214, Leu261 to Asn262, and Thr279. Gly281–Phe285 lines the substrate pocket. Leu350–Ser351 is an NADP(+) binding site.

It belongs to the zinc-containing alcohol dehydrogenase family. In terms of assembly, monomer.

The protein operates within polyketide biosynthesis; lovastatin biosynthesis. In terms of biological role, dehydrogenase; part of the gene cluster that mediates the biosynthesis of monakolin K, also known as lovastatin, and which acts as a potent competitive inhibitor of HMG-CoA reductase. Monakolin K biosynthesis is performed in two stages. The first stage is catalyzed by the nonaketide synthase mokA, which belongs to type I polyketide synthases and catalyzes the iterative nine-step formation of the polyketide. This PKS stage is completed by the action of dehydrogenase mokE, which catalyzes the NADPH-dependent reduction of the unsaturated tetra-, penta- and heptaketide intermediates that arise during the mokA-mediated biosynthesis of the nonaketide chain and leads to dihydromonacolin L. Covalently bound dihydromonacolin L is released from mokA by the mokD esterase. Conversion of dihydromonacolin L into monacolin L and then monacolin J is subsequently performed with the participation of molecular oxygen and P450 monoogygenase mokC. Finally, mokF performs the conversion of monacoline J to monacoline K through the addition of the side-chain diketide moiety (2R)-2-methylbutanoate produced by the diketide synthase mokB. The polypeptide is Dehydrogenase mokE (Monascus pilosus (Red mold)).